A 202-amino-acid chain; its full sequence is Nucleoside triphosphate pyrophosphatase (202 aa).

Catalysis depends on D79, which acts as the Proton acceptor.

The protein belongs to the Maf family. Requires a divalent metal cation as cofactor.

The protein localises to the cytoplasm. It catalyses the reaction a ribonucleoside 5'-triphosphate + H2O = a ribonucleoside 5'-phosphate + diphosphate + H(+). The catalysed reaction is a 2'-deoxyribonucleoside 5'-triphosphate + H2O = a 2'-deoxyribonucleoside 5'-phosphate + diphosphate + H(+). Its function is as follows. Nucleoside triphosphate pyrophosphatase. May have a dual role in cell division arrest and in preventing the incorporation of modified nucleotides into cellular nucleic acids. This chain is Nucleoside triphosphate pyrophosphatase, found in Nitrobacter hamburgensis (strain DSM 10229 / NCIMB 13809 / X14).